Reading from the N-terminus, the 80-residue chain is Small ribosomal subunit protein bS18 (80 aa).

This sequence belongs to the bacterial ribosomal protein bS18 family. As to quaternary structure, part of the 30S ribosomal subunit. Forms a tight heterodimer with protein bS6.

Functionally, binds as a heterodimer with protein bS6 to the central domain of the 16S rRNA, where it helps stabilize the platform of the 30S subunit. The protein is Small ribosomal subunit protein bS18 of Methylocella silvestris (strain DSM 15510 / CIP 108128 / LMG 27833 / NCIMB 13906 / BL2).